A 122-amino-acid polypeptide reads, in one-letter code: Acidic phospholipase A2 2 (122 aa).

Cystine bridges form between Cys26-Cys115, Cys28-Cys44, Cys43-Cys95, Cys49-Cys122, Cys50-Cys88, Cys57-Cys81, and Cys75-Cys86. Positions 27, 29, and 31 each coordinate Ca(2+). Residue His47 is part of the active site. Asp48 is a Ca(2+) binding site. Asp89 is an active-site residue.

The protein belongs to the phospholipase A2 family. Group II subfamily. D49 sub-subfamily. Ca(2+) serves as cofactor. Expressed by the venom gland.

The protein resides in the secreted. The enzyme catalyses a 1,2-diacyl-sn-glycero-3-phosphocholine + H2O = a 1-acyl-sn-glycero-3-phosphocholine + a fatty acid + H(+). In terms of biological role, snake venom phospholipase A2 (PLA2) that has high lipolytic activity. PLA2 catalyzes the calcium-dependent hydrolysis of the 2-acyl groups in 3-sn-phosphoglycerides. The protein is Acidic phospholipase A2 2 of Craspedocephalus gramineus (Bamboo pit viper).